The chain runs to 154 residues: Myoglobin (154 aa).

The 147-residue stretch at 2–148 folds into the Globin domain; sequence GLSDGEWQLV…FRNDMAAKYK (147 aa). At Ser4 the chain carries Phosphoserine. His65 serves as a coordination point for nitrite. Position 65 (His65) interacts with O2. The residue at position 68 (Thr68) is a Phosphothreonine. His94 contacts heme b.

The protein belongs to the globin family. As to quaternary structure, monomeric.

Its subcellular location is the cytoplasm. It localises to the sarcoplasm. The enzyme catalyses Fe(III)-heme b-[protein] + nitric oxide + H2O = Fe(II)-heme b-[protein] + nitrite + 2 H(+). It catalyses the reaction H2O2 + AH2 = A + 2 H2O. Monomeric heme protein which primary function is to store oxygen and facilitate its diffusion within muscle tissues. Reversibly binds oxygen through a pentacoordinated heme iron and enables its timely and efficient release as needed during periods of heightened demand. Depending on the oxidative conditions of tissues and cells, and in addition to its ability to bind oxygen, it also has a nitrite reductase activity whereby it regulates the production of bioactive nitric oxide. Under stress conditions, like hypoxia and anoxia, it also protects cells against reactive oxygen species thanks to its pseudoperoxidase activity. The sequence is that of Myoglobin (MB) from Erythrocebus patas (Red guenon).